Here is a 451-residue protein sequence, read N- to C-terminus: Macrophage scavenger receptor types I and II (451 aa).

At 1-50 the chain is on the cytoplasmic side; the sequence is MEQWDHFHNQQEDTDSCSESVKFDARSMTALLPPNPKNSPSLQEKLKSFK. Position 27 is a phosphoserine (Ser27). A helical; Signal-anchor for type II membrane protein membrane pass occupies residues 51 to 76; that stretch reads AALIALYLLVFAVLIPLIGIVAAQLL. The segment at 77-109 is spacer; sequence KWETKNCSVSSTNANDITQSLTGKGNDSEEEMR. Residues 77 to 451 are Extracellular-facing; sequence KWETKNCSVS…SEDAGVTCTL (375 aa). Residues Asn82, Asn102, Asn143, Asn184, Asn221, Asn249, and Asn267 are each glycosylated (N-linked (GlcNAc...) asparagine). A coiled-coil region spans residues 171–255; the sequence is NAIDEISKSL…VLNNITNDLR (85 aa). The segment at 267 to 346 is disordered; sequence NITLIQGPPG…EKGSGNTLTP (80 aa). Residues 273–341 form the Collagen-like domain; that stretch reads GPPGPPGEKG…KGQKGEKGSG (69 aa). The SRCR domain occupies 350–450; the sequence is VRLVGGSGPH…HSEDAGVTCT (101 aa). 3 cysteine pairs are disulfide-bonded: Cys375–Cys439, Cys388–Cys449, and Cys419–Cys429.

Homotrimer. Interacts with MYO18A. In terms of tissue distribution, isoform I, isoform II and isoform III are expressed in monocyte-derived macrophages. Isoform I and isoform II are expressed in the liver, placenta and brain.

It localises to the membrane. Its function is as follows. Membrane glycoproteins implicated in the pathologic deposition of cholesterol in arterial walls during atherogenesis. Two types of receptor subunits exist. These receptors mediate the endocytosis of a diverse group of macromolecules, including modified low density lipoproteins (LDL). Isoform III does not internalize acetylated LDL. The protein is Macrophage scavenger receptor types I and II (MSR1) of Homo sapiens (Human).